We begin with the raw amino-acid sequence, 455 residues long: Tryptophan dimethylallyltransferase (455 aa).

Residues 79 to 80 and E88 each bind L-tryptophan; that span reads VL. Substrate is bound by residues R99, K186, and Y188. L-tryptophan is bound by residues Y190 and R256. Residues R269, K271, Y273, Q355, Y357, Y421, and Y425 each contribute to the substrate site.

The protein belongs to the tryptophan dimethylallyltransferase family. In terms of assembly, homodimer.

The catalysed reaction is L-tryptophan + dimethylallyl diphosphate = 4-(3-methylbut-2-enyl)-L-tryptophan + diphosphate. The protein operates within alkaloid biosynthesis; ergot alkaloid biosynthesis. Functionally, tryptophan dimethylallyltransferase; part of the gene cluster that mediates the biosynthesis of fungal ergot alkaloid. DmaW catalyzes the first step of ergot alkaloid biosynthesis by condensing dimethylallyl diphosphate (DMAP) and tryptophan to form 4-dimethylallyl-L-tryptophan. The second step is catalyzed by the methyltransferase easF that methylates 4-dimethylallyl-L-tryptophan in the presence of S-adenosyl-L-methionine, resulting in the formation of 4-dimethylallyl-L-abrine. The catalase easC and the FAD-dependent oxidoreductase easE then transform 4-dimethylallyl-L-abrine to chanoclavine-I which is further oxidized by easD in the presence of NAD(+), resulting in the formation of chanoclavine-I aldehyde. Agroclavine dehydrogenase easG then mediates the conversion of chanoclavine-I aldehyde to agroclavine via a non-enzymatic adduct reaction: the substrate is an iminium intermediate that is formed spontaneously from chanoclavine-I aldehyde in the presence of glutathione. Further conversion of agroclavine to paspalic acid is a two-step process involving oxidation of agroclavine to elymoclavine and of elymoclavine to paspalic acid, the second step being performed by the elymoclavine oxidase cloA. However, cloA does not encode a functional enzyme indicating that C.fusiformis terminates its ergot alkaloid pathway at elymoclavine. The protein is Tryptophan dimethylallyltransferase of Claviceps fusiformis (Ergot fungus).